The following is a 116-amino-acid chain: Iron-sulfur cluster insertion protein ErpA (116 aa).

3 residues coordinate iron-sulfur cluster: C44, C108, and C110.

It belongs to the HesB/IscA family. In terms of assembly, homodimer. The cofactor is iron-sulfur cluster.

Functionally, required for insertion of 4Fe-4S clusters for at least IspG. In Shewanella piezotolerans (strain WP3 / JCM 13877), this protein is Iron-sulfur cluster insertion protein ErpA.